The following is a 100-amino-acid chain: MTERFQGRLADVIRRPLITEKATRALEINQYTFEVDHRAAKPDIKAAIEQLFDVKVTGISTMNPPRRSRRMGRFAGKRAQVKKAVVRLAEGNSIQLFPES.

This sequence belongs to the universal ribosomal protein uL23 family. As to quaternary structure, part of the 50S ribosomal subunit. Contacts protein L29, and trigger factor when it is bound to the ribosome.

Its function is as follows. One of the early assembly proteins it binds 23S rRNA. One of the proteins that surrounds the polypeptide exit tunnel on the outside of the ribosome. Forms the main docking site for trigger factor binding to the ribosome. This Synechococcus sp. (strain CC9605) protein is Large ribosomal subunit protein uL23.